We begin with the raw amino-acid sequence, 2450 residues long: Tetratricopeptide repeat protein 28 (2450 aa).

The residue at position 1 (M1) is an N-acetylmethionine. A disordered region spans residues 1–36 (MEQPPPLAPEPASARSRRRREPESPPAPIPLFGART). Position 24 is a phosphoserine (S24). TPR repeat units lie at residues 52–85 (FVEKVRQSNQACHDGDFHTAIVLYNEALAVDPQN), 87–119 (ILYSNRSAAYMKTQQYHKALDDAIKARLLNPKW), 120–153 (PKAYFRQGVALQYLGRHADALAAFASGLAQDPKS), 190–223 (FVVVSVVGQELLTAGHHGASVVVLEAALKIGTCS), 228–261 (GSVFSALSSAHWSLGNTEKSTGYMQQDLDVAKTL), 268–301 (CRAHGNLGSAFFSKGNYREALTNHRHQLVLAMKL), 308–341 (SSALSSLGHVYTAIGDYPNALASHKQCVLLAKQS), 348–381 (ARELGNMGAVYIAMGDFENAVQCHEQHLRIAKDL), 388–421 (ARAYSNLGSAYHYRRNFDKAMSYHNCVLELAQEL), 428–461 (MRAYAGLGHAARCMQDLERAKQYHEQQLGIAEDL), 468–501 (GRASSNLGIIHQMKGDYDTALKLHKTHLCIAQEL), 508–541 (GRAYGNMGNAYNALGMYDQAVKYHRQELQISMEV), 548–581 (ASTHGNLAVAYQALGAHDRALQHYQNHLNIAREL), 588–621 (ARALSNLGNFHCSRGEYVQAAPYYEQYLRLAPDL), 628–661 (GKVCHNLGYAHYCLGNYQEAVKYYEQDLALAKDL), 668–701 (AKAYCNLGLAFKALLNFAKAEECQKYLLSLAQSL), 708–741 (FRALGNLGDIFICKKDINGAIKFYEQQLGLSHHV), 748–781 (ASAYAALGTAYRMVQKYDKALGYHTQELEVYQEL), 788–821 (CRAHGHLAAVYMALGKYTMAFKCYQEQLELGRKL), 828–861 (AQVYGNMGITKMNMNVMEDAIGYFEQQLAMLQQL), 871–904 (GRAYGNLGDCYEALGDYEEAIKYYEQYLSVAQSL), 911–944 (AKAYRGLGNGHRATGSLQQALVCFEKRLVVAHEL), 951–984 (AQAYGELGSLHSQLGNYEQAISCLERQLNIARDM), 991–1024 (SDAACGLGGVYQQMGEYDTALQYHQLDLQIAEET), 1031–1064 (GRAYGNLGLTYESLGTFERAVVYQEQHLSIAAQM), 1071–1104 (TVSYSSLGRTHHALQNYSQAVMYLQEGLRLAEQL), 1111–1144 (AKIRHGLGLSLWASGNLEEAQHQLYRASALFETI), and 1163–1196 (TSSYQALQRVLVSLGHHDEALAVAERGRTRAFAD). Residues 1362–1381 (SGTVSPSKDGTSSLPRRQNS) form a disordered region. Phosphoserine is present on residues S1584 and S2098. The segment at 2001–2364 (KPEGGLEGGG…GTLTSKRDVL (364 aa)) is disordered. Polar residues predominate over residues 2090–2116 (SVSSKGSVSTPNSPVKMTLIPSPNSPF). Residues 2124–2140 (SSDTGESDQSSTETDST) are compositionally biased toward low complexity. Residues 2143–2153 (SQEESTPKLDP) show a composition bias toward basic and acidic residues. Positions 2191–2206 (APSSTTVFRASETSAF) are enriched in polar residues. Position 2216 is a phosphoserine (S2216). Residues 2229-2245 (ARSSSLPKVSSPATSEV) show a composition bias toward polar residues. Composition is skewed to low complexity over residues 2252 to 2262 (SPPGSSHPSPG) and 2296 to 2320 (SPACSAPSPALSYSSAGSARSSPAD). 2 positions are modified to phosphoserine: S2365 and S2370.

In terms of assembly, interacts with AURKB. Expressed in embryos at all stages examined. In adult tissues, detected in heart and at low levels in kidney and testis.

The protein localises to the cytoplasm. It localises to the cytoskeleton. The protein resides in the microtubule organizing center. Its subcellular location is the centrosome. It is found in the spindle. The protein localises to the spindle pole. It localises to the midbody. In terms of biological role, during mitosis, may be involved in the condensation of spindle midzone microtubules, leading to the formation of midbody. Its function is as follows. Essential for the formation and integrity of the midbody. Max play a critical role in the progress of mitosis and cytokinesis during cell cycle. This chain is Tetratricopeptide repeat protein 28 (Ttc28), found in Mus musculus (Mouse).